Here is a 357-residue protein sequence, read N- to C-terminus: Protein RecA (357 aa).

Residue 73 to 80 (GPESSGKT) coordinates ATP.

This sequence belongs to the RecA family.

Its subcellular location is the cytoplasm. Can catalyze the hydrolysis of ATP in the presence of single-stranded DNA, the ATP-dependent uptake of single-stranded DNA by duplex DNA, and the ATP-dependent hybridization of homologous single-stranded DNAs. It interacts with LexA causing its activation and leading to its autocatalytic cleavage. The chain is Protein RecA from Nitratidesulfovibrio vulgaris (strain ATCC 29579 / DSM 644 / CCUG 34227 / NCIMB 8303 / VKM B-1760 / Hildenborough) (Desulfovibrio vulgaris).